Here is a 220-residue protein sequence, read N- to C-terminus: Uracil-DNA glycosylase (220 aa).

D65 functions as the Proton acceptor in the catalytic mechanism.

Belongs to the uracil-DNA glycosylase (UDG) superfamily. UNG family.

Its subcellular location is the cytoplasm. It catalyses the reaction Hydrolyzes single-stranded DNA or mismatched double-stranded DNA and polynucleotides, releasing free uracil.. In terms of biological role, excises uracil residues from the DNA which can arise as a result of misincorporation of dUMP residues by DNA polymerase or due to deamination of cytosine. The sequence is that of Uracil-DNA glycosylase from Bacteroides thetaiotaomicron (strain ATCC 29148 / DSM 2079 / JCM 5827 / CCUG 10774 / NCTC 10582 / VPI-5482 / E50).